The chain runs to 40 residues: uncharacterized protein (40 aa).

Positions 1-14 are enriched in polar residues; the sequence is MNRMLSLSVQSQRA. Residues 1-25 form a disordered region; sequence MNRMLSLSVQSQRAPASPSPYGLKI.

This is an uncharacterized protein from Treponema pallidum (strain Nichols).